The primary structure comprises 209 residues: Guanylate kinase (209 aa).

The region spanning 16–198 (GRLVIISGPS…AVTEICQILL (183 aa)) is the Guanylate kinase-like domain. 23 to 30 (GPSGAGKS) lines the ATP pocket.

Belongs to the guanylate kinase family.

It is found in the cytoplasm. The enzyme catalyses GMP + ATP = GDP + ADP. In terms of biological role, essential for recycling GMP and indirectly, cGMP. This chain is Guanylate kinase, found in Rhodopirellula baltica (strain DSM 10527 / NCIMB 13988 / SH1).